Here is an 80-residue protein sequence, read N- to C-terminus: Acyl carrier protein (80 aa).

The Carrier domain maps to Asn-4–Gln-79. Ser-39 carries the post-translational modification O-(pantetheine 4'-phosphoryl)serine.

This sequence belongs to the acyl carrier protein (ACP) family. Post-translationally, 4'-phosphopantetheine is transferred from CoA to a specific serine of apo-ACP by AcpS. This modification is essential for activity because fatty acids are bound in thioester linkage to the sulfhydryl of the prosthetic group.

Its subcellular location is the cytoplasm. It participates in lipid metabolism; fatty acid biosynthesis. Its function is as follows. Carrier of the growing fatty acid chain in fatty acid biosynthesis. This is Acyl carrier protein from Akkermansia muciniphila (strain ATCC BAA-835 / DSM 22959 / JCM 33894 / BCRC 81048 / CCUG 64013 / CIP 107961 / Muc).